A 483-amino-acid chain; its full sequence is MHTPLEQQEIRYRKGDIIELTITDHAEKDKCFGKTTEGMGVMVSGILAPGDRVSAQIYKVKSRYLEARAIEVLEASPDRVEPVCPVFGSCGGCKWMHVSYEAQLRYKHKKVTDSLEHIGGFESPDVRPVLAAPDALHYRNKVEFSCSNMRYLLQSEIDSDQLAKPKTFALGFHAPGNFEKVLDLDTCYLAKECMNRVLNVLRDFAIERGLEPYAAKAHEGYLRNLMLRYSERHEQLMVNIVTSWYDKALMQALKERLEAAMPEQQMTLLNNVTTRKNTVATGEQEYVISGDGYVTERLGDLDFRISANSFFQTNTRQAETLYDQIIAVGGITPEDTVYDLYCGTGTITLYLARHCKQAIGIEVVESAVKDAEMNAELNGLSNTVFFQADLKNFHAMQEALEPYAKPRIIVTDPPRAGMHPKALDTMLKLQPERIVYVSCNPDNLARDGKEIAARGYRMTSAQPVDMFPQTNHIETVACFERAE.

In terms of domain architecture, TRAM spans 11 to 71 (RYRKGDIIEL…SRYLEARAIE (61 aa)). Residues Cys-84, Cys-90, Cys-93, and Cys-187 each coordinate [4Fe-4S] cluster. Gln-312, Tyr-341, Glu-362, and Asp-412 together coordinate S-adenosyl-L-methionine. The active-site Nucleophile is Cys-439.

Belongs to the class I-like SAM-binding methyltransferase superfamily. RNA M5U methyltransferase family.

This is an uncharacterized protein from Chlorobaculum tepidum (strain ATCC 49652 / DSM 12025 / NBRC 103806 / TLS) (Chlorobium tepidum).